The following is a 382-amino-acid chain: Mannitol-1-phosphate 5-dehydrogenase (382 aa).

3-14 (ALHFGAGNIGRG) contributes to the NAD(+) binding site.

It belongs to the mannitol dehydrogenase family.

It carries out the reaction D-mannitol 1-phosphate + NAD(+) = beta-D-fructose 6-phosphate + NADH + H(+). This chain is Mannitol-1-phosphate 5-dehydrogenase, found in Cronobacter sakazakii (strain ATCC BAA-894) (Enterobacter sakazakii).